A 135-amino-acid chain; its full sequence is Holo-[acyl-carrier-protein] synthase (135 aa).

Residues Asp9 and Glu63 each contribute to the Mg(2+) site.

Belongs to the P-Pant transferase superfamily. AcpS family. The cofactor is Mg(2+).

Its subcellular location is the cytoplasm. The catalysed reaction is apo-[ACP] + CoA = holo-[ACP] + adenosine 3',5'-bisphosphate + H(+). In terms of biological role, transfers the 4'-phosphopantetheine moiety from coenzyme A to a Ser of acyl-carrier-protein. The chain is Holo-[acyl-carrier-protein] synthase from Paraburkholderia phymatum (strain DSM 17167 / CIP 108236 / LMG 21445 / STM815) (Burkholderia phymatum).